A 387-amino-acid chain; its full sequence is WD repeat-containing protein 89 (387 aa).

WD repeat units follow at residues 21 to 65 (KEPT…VLRE), 68 to 107 (GYPG…EKPV), 112 to 156 (GYPS…QDLS), 168 to 208 (THSD…EEDA), 214 to 254 (NSIS…TDEP), and 319 to 358 (GHAA…KTFT).

The sequence is that of WD repeat-containing protein 89 (WDR89) from Pongo abelii (Sumatran orangutan).